The following is a 291-amino-acid chain: Transcription initiation factor IIE subunit beta (291 aa).

The residue at position 1 (Met1) is an N-acetylmethionine. Over residues 1–13 (MDPSLLRERELFK) the composition is skewed to basic and acidic residues. The disordered stretch occupies residues 1–63 (MDPSLLRERE…NSDHSNGSFN (63 aa)). Positions 50–62 (GSKQNSDHSNGSF) are enriched in polar residues. Ser61 carries the phosphoserine modification. Residues 66 to 146 (ALSGSSGYKF…YAFKPKYNVR (81 aa)) constitute a DNA-binding region (TFIIE beta). Lys74 bears the N6-acetyllysine mark. The interval 243–272 (SSMQESGPKKVAPIQRRKKPASQKKRRFKT) is disordered. The span at 257-271 (QRRKKPASQKKRRFK) shows a compositional bias: basic residues.

This sequence belongs to the TFIIE beta subunit family. As to quaternary structure, tetramer of two alpha and two beta chains. Interacts with FACT subunit SUPT16H. Interacts with ATF7IP. Interacts with SND1. Part of TBP-based Pol II pre-initiation complex (PIC), in which Pol II core assembles with general transcription factors and other specific initiation factors including GTF2E1, GTF2E2, GTF2F1, GTF2F2, TCEA1, ERCC2, ERCC3, GTF2H2, GTF2H3, GTF2H4, GTF2H5, GTF2A1, GTF2A2, GTF2B and TBP; this large multi-subunit PIC complex mediates DNA unwinding and targets Pol II core to the transcription start site where the first phosphodiester bond forms.

The protein resides in the nucleus. Its function is as follows. Recruits TFIIH to the initiation complex and stimulates the RNA polymerase II C-terminal domain kinase and DNA-dependent ATPase activities of TFIIH. Both TFIIH and TFIIE are required for promoter clearance by RNA polymerase. This chain is Transcription initiation factor IIE subunit beta (GTF2E2), found in Homo sapiens (Human).